The sequence spans 190 residues: Adenylate kinase (190 aa).

Residue 12–17 coordinates ATP; it reads GSGKTT. The segment at 33–62 is NMP; that stretch reads STGDLLRAEVASGSELGKTIDSFISKGNLV. Residues Thr-34, Arg-39, 60–62, 87–90, and Gln-94 contribute to the AMP site; these read NLV and GYPR. The LID stretch occupies residues 129–135; that stretch reads GRARGAD. ATP is bound at residue Arg-130. Arg-132 and Arg-144 together coordinate AMP. Arg-172 lines the ATP pocket.

Belongs to the adenylate kinase family. As to quaternary structure, monomer.

It localises to the cytoplasm. The enzyme catalyses AMP + ATP = 2 ADP. It participates in purine metabolism; AMP biosynthesis via salvage pathway; AMP from ADP: step 1/1. Catalyzes the reversible transfer of the terminal phosphate group between ATP and AMP. Plays an important role in cellular energy homeostasis and in adenine nucleotide metabolism. In Campylobacter lari (strain RM2100 / D67 / ATCC BAA-1060), this protein is Adenylate kinase.